The sequence spans 542 residues: Chaperonin GroEL 3 (542 aa).

ATP contacts are provided by residues 30–33, Lys-51, 87–91, Gly-415, and Asp-494; these read TLGP and DGTTT. A disordered region spans residues 523-542; it reads KPKKKEPPMPAMPSDMGDYD.

This sequence belongs to the chaperonin (HSP60) family. As to quaternary structure, forms a cylinder of 14 subunits composed of two heptameric rings stacked back-to-back. Interacts with the co-chaperonin GroES.

Its subcellular location is the cytoplasm. It carries out the reaction ATP + H2O + a folded polypeptide = ADP + phosphate + an unfolded polypeptide.. Together with its co-chaperonin GroES, plays an essential role in assisting protein folding. The GroEL-GroES system forms a nano-cage that allows encapsulation of the non-native substrate proteins and provides a physical environment optimized to promote and accelerate protein folding. The protein is Chaperonin GroEL 3 of Syntrophus aciditrophicus (strain SB).